The sequence spans 108 residues: Protein ORFa in retron Ec67 (108 aa).

This is Protein ORFa in retron Ec67 from Escherichia coli.